Here is a 520-residue protein sequence, read N- to C-terminus: GMP synthase [glutamine-hydrolyzing] (520 aa).

In terms of domain architecture, Glutamine amidotransferase type-1 spans 13–205 (KIIVLDYGSQ…ALNICKAKGD (193 aa)). Cys90 functions as the Nucleophile in the catalytic mechanism. Active-site residues include His179 and Glu181. Positions 206–395 (WSMDNFIDMQ…LGMPDHIVWR (190 aa)) constitute a GMPS ATP-PPase domain. 233–239 (SGGVDSS) contacts ATP.

In terms of assembly, homodimer.

It carries out the reaction XMP + L-glutamine + ATP + H2O = GMP + L-glutamate + AMP + diphosphate + 2 H(+). The protein operates within purine metabolism; GMP biosynthesis; GMP from XMP (L-Gln route): step 1/1. Functionally, catalyzes the synthesis of GMP from XMP. This Streptococcus pneumoniae (strain P1031) protein is GMP synthase [glutamine-hydrolyzing].